A 499-amino-acid chain; its full sequence is Lysosomal Pro-X carboxypeptidase (499 aa).

A signal peptide spans Met1–Ala21. Residues Asn22–Thr47 constitute a propeptide that is removed on maturation. A glycan (N-linked (GlcNAc...) asparagine) is linked at Asn103. Residue Ser181 is the Charge relay system of the active site. The segment at His196 to Tyr337 is SKS domain. 4 cysteine pairs are disulfide-bonded: Cys217–Cys375, Cys235–Cys313, Cys266–Cys346, and Cys367–Cys397. Asn234 carries N-linked (GlcNAc...) asparagine glycosylation. N-linked (GlcNAc...) asparagine glycosylation is found at Asn339 and Asn348. N-linked (GlcNAc...) asparagine glycosylation is present at Asn418. Residues Asp433 and His458 each act as charge relay system in the active site.

Belongs to the peptidase S28 family. As to quaternary structure, homodimer.

The protein localises to the lysosome. It catalyses the reaction Cleavage of a -Pro-|-Xaa bond to release a C-terminal amino acid.. Cleaves C-terminal amino acids linked to proline in peptides such as angiotensin II, III and des-Arg9-bradykinin. This cleavage occurs at acidic pH, but enzymatic activity is retained with some substrates at neutral pH. The chain is Lysosomal Pro-X carboxypeptidase (PRCP) from Bos taurus (Bovine).